The following is a 338-amino-acid chain: Ketol-acid reductoisomerase (NADP(+)) (338 aa).

The 181-residue stretch at 1-181 (MKVYYDKDAD…GGGKAGIIET (181 aa)) folds into the KARI N-terminal Rossmann domain. NADP(+) is bound by residues 24 to 27 (YGSQ), Arg47, and Ser52. His107 is an active-site residue. Residue Gly133 participates in NADP(+) binding. One can recognise a KARI C-terminal knotted domain in the interval 182 to 327 (NFREETETDL…EKLRAMMPWI (146 aa)). Mg(2+) contacts are provided by Asp190, Glu194, Glu226, and Glu230. Ser251 serves as a coordination point for substrate.

It belongs to the ketol-acid reductoisomerase family. The cofactor is Mg(2+).

It carries out the reaction (2R)-2,3-dihydroxy-3-methylbutanoate + NADP(+) = (2S)-2-acetolactate + NADPH + H(+). The catalysed reaction is (2R,3R)-2,3-dihydroxy-3-methylpentanoate + NADP(+) = (S)-2-ethyl-2-hydroxy-3-oxobutanoate + NADPH + H(+). It functions in the pathway amino-acid biosynthesis; L-isoleucine biosynthesis; L-isoleucine from 2-oxobutanoate: step 2/4. Its pathway is amino-acid biosynthesis; L-valine biosynthesis; L-valine from pyruvate: step 2/4. Functionally, involved in the biosynthesis of branched-chain amino acids (BCAA). Catalyzes an alkyl-migration followed by a ketol-acid reduction of (S)-2-acetolactate (S2AL) to yield (R)-2,3-dihydroxy-isovalerate. In the isomerase reaction, S2AL is rearranged via a Mg-dependent methyl migration to produce 3-hydroxy-3-methyl-2-ketobutyrate (HMKB). In the reductase reaction, this 2-ketoacid undergoes a metal-dependent reduction by NADPH to yield (R)-2,3-dihydroxy-isovalerate. The protein is Ketol-acid reductoisomerase (NADP(+)) of Methylibium petroleiphilum (strain ATCC BAA-1232 / LMG 22953 / PM1).